The chain runs to 66 residues: Large ribosomal subunit protein bL35 (66 aa).

Positions 1–26 are enriched in basic residues; it reads MPKMKTHRGGAKRVKRTGSGKLKRSR. Disordered stretches follow at residues 1-28 and 36-55; these read MPKMKTHRGGAKRVKRTGSGKLKRSRAY and KSTKQKRGLRKASLVSKGDQ.

This sequence belongs to the bacterial ribosomal protein bL35 family.

The protein is Large ribosomal subunit protein bL35 of Macrococcus caseolyticus (strain JCSC5402) (Macrococcoides caseolyticum).